A 146-amino-acid polypeptide reads, in one-letter code: Hemoglobin subunit beta-1 (146 aa).

Residues 2–146 enclose the Globin domain; the sequence is VWTNEERSII…VVSALGKQYH (145 aa). Positions 63 and 92 each coordinate heme b.

This sequence belongs to the globin family. Hb1 is a heterotetramer of two alpha chains and two beta-1 chains. In terms of tissue distribution, red blood cells.

Functionally, involved in oxygen transport from gills to the various peripheral tissues. The polypeptide is Hemoglobin subunit beta-1 (hbb1) (Pseudaphritis urvillii (Congolli)).